The following is a 78-amino-acid chain: Large ribosomal subunit protein bL28B (78 aa).

The interval 1–29 (MSAHCQVTGRKPGFGNTVSHSHRRSRRRW) is disordered. Residues 20–29 (HSHRRSRRRW) are compositionally biased toward basic residues.

This sequence belongs to the bacterial ribosomal protein bL28 family.

This Mycobacterium bovis (strain ATCC BAA-935 / AF2122/97) protein is Large ribosomal subunit protein bL28B (rpmB2).